The sequence spans 307 residues: Aspartate carbamoyltransferase catalytic subunit (307 aa).

Carbamoyl phosphate-binding residues include arginine 54 and threonine 55. Lysine 83 is an L-aspartate binding site. Residues arginine 104, histidine 132, and glutamine 135 each coordinate carbamoyl phosphate. Arginine 165 and arginine 228 together coordinate L-aspartate. The carbamoyl phosphate site is built by leucine 267 and proline 268.

The protein belongs to the aspartate/ornithine carbamoyltransferase superfamily. ATCase family. As to quaternary structure, heterododecamer (2C3:3R2) of six catalytic PyrB chains organized as two trimers (C3), and six regulatory PyrI chains organized as three dimers (R2).

It carries out the reaction carbamoyl phosphate + L-aspartate = N-carbamoyl-L-aspartate + phosphate + H(+). Its pathway is pyrimidine metabolism; UMP biosynthesis via de novo pathway; (S)-dihydroorotate from bicarbonate: step 2/3. Its function is as follows. Catalyzes the condensation of carbamoyl phosphate and aspartate to form carbamoyl aspartate and inorganic phosphate, the committed step in the de novo pyrimidine nucleotide biosynthesis pathway. In Clostridium botulinum (strain Langeland / NCTC 10281 / Type F), this protein is Aspartate carbamoyltransferase catalytic subunit.